A 207-amino-acid polypeptide reads, in one-letter code: 2,3-bisphosphoglycerate-dependent phosphoglycerate mutase (207 aa).

Substrate is bound by residues 9-16 (RHGQSDWN), 22-23 (TG), arginine 61, 88-91 (ERDY), lysine 99, 115-116 (RR), and 159-160 (GN). Histidine 10 serves as the catalytic Tele-phosphohistidine intermediate. Glutamate 88 (proton donor/acceptor) is an active-site residue.

Belongs to the phosphoglycerate mutase family. BPG-dependent PGAM subfamily. As to quaternary structure, homodimer.

It carries out the reaction (2R)-2-phosphoglycerate = (2R)-3-phosphoglycerate. Its pathway is carbohydrate degradation; glycolysis; pyruvate from D-glyceraldehyde 3-phosphate: step 3/5. In terms of biological role, catalyzes the interconversion of 2-phosphoglycerate and 3-phosphoglycerate. The sequence is that of 2,3-bisphosphoglycerate-dependent phosphoglycerate mutase from Beijerinckia indica subsp. indica (strain ATCC 9039 / DSM 1715 / NCIMB 8712).